The following is an 888-amino-acid chain: Alanine--tRNA ligase (888 aa).

Zn(2+) is bound by residues His573, His577, Cys676, and His680.

It belongs to the class-II aminoacyl-tRNA synthetase family. It depends on Zn(2+) as a cofactor.

The protein localises to the cytoplasm. It catalyses the reaction tRNA(Ala) + L-alanine + ATP = L-alanyl-tRNA(Ala) + AMP + diphosphate. Functionally, catalyzes the attachment of alanine to tRNA(Ala) in a two-step reaction: alanine is first activated by ATP to form Ala-AMP and then transferred to the acceptor end of tRNA(Ala). Also edits incorrectly charged Ser-tRNA(Ala) and Gly-tRNA(Ala) via its editing domain. This is Alanine--tRNA ligase from Corynebacterium glutamicum (strain R).